A 340-amino-acid polypeptide reads, in one-letter code: MIYENLLRPLLFRLDPETAHELSLSALRLAAKLGPANPLKQSLPTSPRTVMGLEFPNPIGLAAGLDKNGDCIDGLAALGFGFLEIGTVTPRPQPGNPRPRLFRVPEAGALVNRMGFNNSGVAHLIARVRQTRYRGILGINIGKNLTTPVERALDDYREGLKAVYPYAHYVTLNVSSPNTPGLRSLQFGALLDELLDGLMGEREELTAQHGKRVPLALKVAPDMDSREIKALAGAVVRHGVDAVIATNTTASRDGVEGLEHADEAGGLSGKPLFLRSTEVVARLADALQGRAPIIACGGVFSGADAVAKFEAGASLVQVYTGFIYRGPALLAEIGRVVAAL.

FMN-binding positions include 63–67 (AGLDK) and Thr87. Lys67 contributes to the substrate binding site. Substrate is bound at residue 112-116 (NRMGF). Residues Asn140 and Asn173 each coordinate FMN. Asn173 provides a ligand contact to substrate. Residue Ser176 is the Nucleophile of the active site. Asn178 lines the substrate pocket. Positions 218 and 246 each coordinate FMN. Residue 247–248 (NT) participates in substrate binding. FMN is bound by residues Gly269, Gly298, and 319–320 (YT).

It belongs to the dihydroorotate dehydrogenase family. Type 2 subfamily. In terms of assembly, monomer. FMN is required as a cofactor.

Its subcellular location is the cell membrane. The enzyme catalyses (S)-dihydroorotate + a quinone = orotate + a quinol. It functions in the pathway pyrimidine metabolism; UMP biosynthesis via de novo pathway; orotate from (S)-dihydroorotate (quinone route): step 1/1. In terms of biological role, catalyzes the conversion of dihydroorotate to orotate with quinone as electron acceptor. In Methylococcus capsulatus (strain ATCC 33009 / NCIMB 11132 / Bath), this protein is Dihydroorotate dehydrogenase (quinone).